A 240-amino-acid polypeptide reads, in one-letter code: Inhibitor of growth protein 5 (240 aa).

N6-acetyllysine is present on lysine 114. Residues 116-165 are disordered; that stretch reads EGSDFESSGGRGLKKGRGQKEKRGSRGRGRRTSEEDTPKKKKHKGGSEFT. A Phosphoserine modification is found at serine 118. The residue at position 126 (arginine 126) is an Omega-N-methylarginine. The PHD-type zinc finger occupies 186-235; the sequence is PTYCLCHQVSYGEMIGCDNPDCPIEWFHFACVDLTTKPKGKWFCPRCVQE. Positions 189, 191, 202, 207, 213, 216, 229, and 232 each coordinate Zn(2+).

Belongs to the ING family. Component of the HBO1 complex composed of KAT7/HBO1, MEAF6, ING5, and one scaffold subunit: complexes containing BRPF scaffold (BRPF1, BRD1/BRPF2 or BRPF3) direct KAT7/HBO1 specificity towards H3K14ac, while complexes containing JADE scaffold (JADE1, JADE2 and JADE3) mediate acetylation of histone H4. Component of the MOZ/MORF complex composed at least of ING5, KAT6A, KAT6B, MEAF6 and one of BRPF1, BRD1/BRPF2 and BRPF3. Interacts with H3K4me3 and to a lesser extent with H3K4me2. Interacts with EP300 and p53/TP53. Interacts with INCA1. As to expression, down-regulated in bone marrow cells in acute myeloid leukemia patients as compared with normal bone marrow cells.

It is found in the nucleus. The protein resides in the chromosome. Its function is as follows. Component of the HBO1 complex, which specifically mediates acetylation of histone H3 at 'Lys-14' (H3K14ac) and, to a lower extent, acetylation of histone H4. Component of the MOZ/MORF complex which has a histone H3 acetyltransferase activity. Through chromatin acetylation it may regulate DNA replication and may function as a transcriptional coactivator. Inhibits cell growth, induces a delay in S-phase progression and enhances Fas-induced apoptosis in an INCA1-dependent manner. The polypeptide is Inhibitor of growth protein 5 (ING5) (Homo sapiens (Human)).